The primary structure comprises 1025 residues: MEQQIHQAVEIALSGTADPTLKNQAFEFINHIKSTEEGYKACVDILIKSSNESINDGLKFFVYQVIDENIDKLSQEQVFTLNQELFKCLSSYINNNLQDPTHLRNKFAQILAKQFCQVYINIYPNFIKDLLELINVSEATSTNPNNLLAIDYYTRVLIGIHSEIGDKYITRSQEIHNRNNLLKDAIRTQDMQQMVTSWIQILTNPSFAHSEEILNNTLKIVGQYVSWMEISLFISPEFINTVFSFLQNSKLRNTTCETLIDIISKKMAPQNKLELLSLLNLTEFIGTLNLIEKNKNDDDDEDEDVEFMEFVAKLLNQIGQELLIVLENQSGLLEQVNAQLFKLWPAILGCLNHNYDDVSQNVFPFLQQFLTLSKKNPQLYTVDLMSTLLNKLILKMRFDDDDDGVSDEDTQAQFLDFRAKLKSFQDTIALLEPQLYLEAIPVIINESIFETNVDDVNWRKVELGLYQLNGFSDSIRNNVFQISRNEINQSKPYLIFQEFLIKLINSDLIMKINHPMIQSNFFELIVKHYNFLVSRESNFELIIKILQIFTSPLGLFNENEKVRIRSWYLFFRFIKLTKPKLDNEALIESIVVKMQPLLVIKAELPTKDEDDDIVENGNFNNQQYLFETMGLLISLIPNELSQLKSKLIDLIFQPIFNDLEKCISIPESQREPIVILQAHHSLQAIGTLVRGYDYESGLKFLPDVVAKIDNAAQVVLITLENFSSHEMIRDATRFAFARFIPIFKSDNDNNNKNNLIISQHLSKLITIIWSSSNLKISEYSDFLSFLGQIVHNFRTDDNIYQLLNNFITPLFQKIFQVLQNPVTEDENLRPDIIRDKNSLKRATLNFISSIVMNHLSSLLITESNKQELPEIIGKVFEYSYDLSDTTTSKLAIVQLTNFVNVFGGSGGKLDDKEDKYSENLPPIEGIDEFLINKVINLSFELPFQKQEFNLNDAQYRLIAQEIAILLKSFELKKHDEFIVVLSNYLLNMGLSQDLCNDFCLNLHNLDLKDFKKYFISFINKMKSGK.

This sequence belongs to the exportin family.

It localises to the nucleus. It is found in the cytoplasm. Its function is as follows. tRNA nucleus export receptor which facilitates tRNA translocation across the nuclear pore complex. Involved in pre-tRNA splicing, probably by affecting the interaction of pre-tRNA with splicing endonuclease. The sequence is that of Exportin-T (LOS1) from Candida albicans (strain SC5314 / ATCC MYA-2876) (Yeast).